We begin with the raw amino-acid sequence, 78 residues long: Large ribosomal subunit protein bL28 (78 aa).

The segment at 1–27 (MSAYCQVTGRKPSFGKSVSHSHRRTNR) is disordered.

Belongs to the bacterial ribosomal protein bL28 family.

The polypeptide is Large ribosomal subunit protein bL28 (Corynebacterium kroppenstedtii (strain DSM 44385 / JCM 11950 / CIP 105744 / CCUG 35717)).